Here is an 81-residue protein sequence, read N- to C-terminus: Lantipeptide prochlorosin 1.1 (81 aa).

A propeptide spanning residues 1-65 is cleaved from the precursor; sequence MSEEQLKAFI…DDDLEGVAGG (65 aa). A cross-link (beta-methyllanthionine (Cys-Thr)) is located at residues 68-72; the sequence is CVQGT. Positions 77 to 81 form a cross-link, beta-methyllanthionine (Thr-Cys); the sequence is TINVC.

In terms of processing, cross-links are proved in vitro, when coepressed in E.coli with the ProcM lanthionine synthetase. Post-translationally, the beta-methyllanthionine residues have a DL configuration (with 2S,3S,6R stereochemistry). Maturation of prochlorosin involves the enzymatic conversion of Thr, and Ser into dehydrated AA and the formation of thioether bonds with cysteines. This is followed by membrane translocation and cleavage of the modified precursor.

It is found in the secreted. Its function is as follows. Lanthionine-containing peptide (lantipeptide) with unknown function. Does not show antibiotic activity against Lactococcus lactis 117 and Bacillus subtilis 6633 bacteria. Organisms that produce this peptide live in oligotrophic environments at very dilute concentrations, suggesting this peptide is not secreted to influence other bacteria. This Prochlorococcus marinus (strain MIT 9313) protein is Lantipeptide prochlorosin 1.1.